Consider the following 195-residue polypeptide: Large ribosomal subunit protein uL18 (195 aa).

Belongs to the universal ribosomal protein uL18 family. In terms of assembly, part of the 50S ribosomal subunit. Contacts the 5S and 23S rRNAs.

Functionally, this is one of the proteins that bind and probably mediate the attachment of the 5S RNA into the large ribosomal subunit, where it forms part of the central protuberance. This Korarchaeum cryptofilum (strain OPF8) protein is Large ribosomal subunit protein uL18.